The primary structure comprises 259 residues: Uridylate kinase (259 aa).

10–13 (KLSG) lines the ATP pocket. Gly52 is a binding site for UMP. The ATP site is built by Gly53 and Arg57. UMP is bound by residues Asp72 and 134–141 (NGQPFLTT). The ATP site is built by Tyr168 and Asp171. The tract at residues 236 to 259 (ISSSPEKSEEFGNEVLASPAESTA) is disordered.

The protein belongs to the UMP kinase family. As to quaternary structure, homohexamer.

The protein resides in the cytoplasm. The catalysed reaction is UMP + ATP = UDP + ADP. It participates in pyrimidine metabolism; CTP biosynthesis via de novo pathway; UDP from UMP (UMPK route): step 1/1. Inhibited by UTP. In terms of biological role, catalyzes the reversible phosphorylation of UMP to UDP. This is Uridylate kinase from Frankia casuarinae (strain DSM 45818 / CECT 9043 / HFP020203 / CcI3).